The chain runs to 171 residues: Transcription antitermination protein NusB (171 aa).

Belongs to the NusB family.

Functionally, involved in transcription antitermination. Required for transcription of ribosomal RNA (rRNA) genes. Binds specifically to the boxA antiterminator sequence of the ribosomal RNA (rrn) operons. The sequence is that of Transcription antitermination protein NusB from Pelodictyon phaeoclathratiforme (strain DSM 5477 / BU-1).